The sequence spans 258 residues: MAVAVRVIPCLDVDAGRVVKGINFEGLRDAGDPVELAHRYDNGGADELTFLDVTASSGNRETTFDVVRRTAEEVFIPLTVGGGVRGVAEVDKLLRYGADKASINTAAVARPDVIDEITRHFGSQVLVLSVDARRTRPGSEPTASGFEVTTHGGRQGTGIDAIEWAREAADRGVGEILLNSIDADGTKDGFDIELIRLVRAAVRVPIIASGGAGKPEHFPPAVAAGADAVLAASIFHFGPVDMISQVKTAIREAGFEVR.

Residues D12 and D131 contribute to the active site.

The protein belongs to the HisA/HisF family. Heterodimer of HisH and HisF.

It localises to the cytoplasm. It carries out the reaction 5-[(5-phospho-1-deoxy-D-ribulos-1-ylimino)methylamino]-1-(5-phospho-beta-D-ribosyl)imidazole-4-carboxamide + L-glutamine = D-erythro-1-(imidazol-4-yl)glycerol 3-phosphate + 5-amino-1-(5-phospho-beta-D-ribosyl)imidazole-4-carboxamide + L-glutamate + H(+). It functions in the pathway amino-acid biosynthesis; L-histidine biosynthesis; L-histidine from 5-phospho-alpha-D-ribose 1-diphosphate: step 5/9. Its function is as follows. IGPS catalyzes the conversion of PRFAR and glutamine to IGP, AICAR and glutamate. The HisF subunit catalyzes the cyclization activity that produces IGP and AICAR from PRFAR using the ammonia provided by the HisH subunit. This is Imidazole glycerol phosphate synthase subunit HisF from Arthrobacter sp. (strain FB24).